A 336-amino-acid polypeptide reads, in one-letter code: Protein SphX (336 aa).

An N-terminal signal peptide occupies residues 1–27 (MFDLSRLSRGIVPMALLLLGISACTPS).

This sequence belongs to the PstS family.

Functionally, may be involved in the system for phosphate transport across the cytoplasmic membrane. This Synechocystis sp. (strain ATCC 27184 / PCC 6803 / Kazusa) protein is Protein SphX (sphX).